The chain runs to 1639 residues: Peroxide stress-activated histidine kinase mak1 (1639 aa).

The span at S38–S49 shows a compositional bias: polar residues. The disordered stretch occupies residues S38–S76. The segment covering N67 to S76 has biased composition (low complexity). Residues P716–G786 enclose the PAS 1 domain. The PAC 1 domain occupies F789–K841. A PAS 2 domain is found at N848–Q920. Positions F929–E982 constitute a PAC 2 domain. The Histidine kinase domain maps to N1000–M1223. Position 1003 is a phosphohistidine; by autocatalysis (H1003). Residues S1507–L1629 form the Response regulatory domain. Position 1559 is a 4-aspartylphosphate (D1559).

The protein resides in the cytoplasm. It catalyses the reaction ATP + protein L-histidine = ADP + protein N-phospho-L-histidine.. In terms of biological role, involved in the control of the SAPK-dependent transcriptional response to peroxide stress. Also has a role in G2/M regulation. The protein is Peroxide stress-activated histidine kinase mak1 (mak1) of Schizosaccharomyces pombe (strain 972 / ATCC 24843) (Fission yeast).